The primary structure comprises 418 residues: MKVLVLGAGVAGVSSAWYLAEAGHEVTVIDRAKGVAMETSFANAGQLSYGYTTPWAAPGIPTKALKWLFKSHPPLLFRPDGSLYQIEWLWRMLQNCTAAHYQTNKERMVRISEYSREMFRRFEAQTGMNFEERKKGTLQIFRQTKEVEAAEQDIAVLERYGVPYRRLKPEECAEFEPALARVTAKIAGGLHLPADATGDCHLFTENLYKLCQEKGVQFHFNQTISRIDHNGLRIKAVETETGRFEADAVVCALGCFSRTVLAQLDLDLPIYPVKGYSLTLPVTNSDGAPVSTVLDESYKVAITRFDNRIRVGGMAELSGYEIKLPEKRRETLALVVNDLFPEGGDLSQALFWSGLRPMTPDSTPLIGRTRFENLFLNTGHGTLGWTMSLGSAKLTADIVSGKDTEIRSDDLSLSRYQA.

3 to 17 (VLVLGAGVAGVSSAW) is a binding site for FAD.

This sequence belongs to the DadA oxidoreductase family. FAD is required as a cofactor.

The catalysed reaction is a D-alpha-amino acid + A + H2O = a 2-oxocarboxylate + AH2 + NH4(+). The protein operates within amino-acid degradation; D-alanine degradation; NH(3) and pyruvate from D-alanine: step 1/1. Its function is as follows. Oxidative deamination of D-amino acids. The sequence is that of D-amino acid dehydrogenase from Neisseria meningitidis serogroup C / serotype 2a (strain ATCC 700532 / DSM 15464 / FAM18).